Reading from the N-terminus, the 530-residue chain is Metal transporter Nramp2 (530 aa).

The tract at residues 1–35 (MENDVKENLEEEEDRLLPPPPPSQSLPSTDSESEA) is disordered. The next 12 helical transmembrane spans lie at 68–88 (LWLF…PGNL), 96–116 (AIAG…GLLI), 153–173 (LALI…IQIL), 177–197 (FLPL…FLFL), 205–225 (LEAV…WMFG), 251–271 (AVGV…SALV), 297–317 (VALF…AKGF), 339–359 (FGGG…AAGQ), 395–415 (IVPT…LDVL), 418–438 (WLNV…LTLV), 456–476 (IAWT…LDFF), and 484–504 (LFGV…VYLI).

It belongs to the NRAMP (TC 2.A.55) family.

The protein localises to the membrane. Its function is as follows. Seems to be involved in iron uptake. The protein is Metal transporter Nramp2 (NRAMP2) of Arabidopsis thaliana (Mouse-ear cress).